We begin with the raw amino-acid sequence, 372 residues long: Embryonic growth/differentiation factor 1 (372 aa).

A signal peptide spans 1-29; it reads MPPPQQGPCGHHLLLLLALLLPSLPLTRA. The propeptide occupies 30–253; sequence PVPPGPAAAL…LCHPLARPRR (224 aa). A disordered region spans residues 67 to 86; that stretch reads RRRDPQETRSGSRRTSPGVT. Asn-206 is a glycosylation site (N-linked (GlcNAc...) asparagine). 3 disulfide bridges follow: Cys-267-Cys-337, Cys-296-Cys-369, and Cys-300-Cys-371.

This sequence belongs to the TGF-beta family. In terms of assembly, homodimer; disulfide-linked. In terms of tissue distribution, expressed in the brain.

Its subcellular location is the secreted. Functionally, may mediate cell differentiation events during embryonic development. This chain is Embryonic growth/differentiation factor 1 (GDF1), found in Homo sapiens (Human).